Here is a 360-residue protein sequence, read N- to C-terminus: GTP 3',8-cyclase (360 aa).

The Radical SAM core domain maps to 33–251 (RFGRSATDLR…LQPHFRLRPD (219 aa)). Position 42 (R42) interacts with GTP. Residues C49 and C53 each contribute to the [4Fe-4S] cluster site. An S-adenosyl-L-methionine-binding site is contributed by Y55. A [4Fe-4S] cluster-binding site is contributed by C56. Residue R93 participates in GTP binding. Residue G97 participates in S-adenosyl-L-methionine binding. T124 serves as a coordination point for GTP. An S-adenosyl-L-methionine-binding site is contributed by S148. K185 is a GTP binding site. M219 serves as a coordination point for S-adenosyl-L-methionine. [4Fe-4S] cluster is bound by residues C287 and C290. Position 292-294 (292-294 (RTR)) interacts with GTP. C304 lines the [4Fe-4S] cluster pocket.

This sequence belongs to the radical SAM superfamily. MoaA family. In terms of assembly, monomer and homodimer. [4Fe-4S] cluster serves as cofactor.

The enzyme catalyses GTP + AH2 + S-adenosyl-L-methionine = (8S)-3',8-cyclo-7,8-dihydroguanosine 5'-triphosphate + 5'-deoxyadenosine + L-methionine + A + H(+). It functions in the pathway cofactor biosynthesis; molybdopterin biosynthesis. Catalyzes the cyclization of GTP to (8S)-3',8-cyclo-7,8-dihydroguanosine 5'-triphosphate. This chain is GTP 3',8-cyclase, found in Mycobacterium marinum (strain ATCC BAA-535 / M).